The chain runs to 882 residues: MRVLGFLSSHAGTGTAAAHTRWRWLAPLGIQAIRPASASAGGNAVSSATPQAPPCPIHANVGVGRASALGPGPSGFMAPSAGIVTAIRDGPNSNSRCSTVRTHATRSKSTGPSRATSSGPATAAPPRRRRRTSNDTQDGGLTSEQTPTNTAVAAVAATAAAAAGASASAAAPALPVALNPTWRTPPTAEAARRITQAASASAAYSGSSAAAAAAAVAAGPSSAASVARGGSAAAARSAAASALAANANTSSGAASAAAIAATASTAPGKLLLGGDLSRALAAAGSTTAPPLPLPSRAGLSAPKHTASAAAAAAAAASVLPASTPAAASQTPPTTVTSCGTGSGAPATPRAARSPTAAVSVSSADAAAAAAAAAAPASAAATAAAAVLPTRHIVAAVDPDLNGALALIYWDEDPNDPTTATASGPAAATTDAAAAAAAAAAAATGPAARLATLAAAAPPGSGAAAAADEAAAAALLWLPTPPRPPADASRWRVCVWDMPVSAAERQKRTASGQVARRRLLHVAGARAVLSAALAAALPPPGEARPVALYGYVEVPPILPGDGNIAAYTSLWSTGSWLGLLTGMGFTVGSTPVRRWKTDLGLYGAKGKDASLALARALFPGQQPILRHKKNHGRADALLIAAWALGACLPRGLGASLRRNGITLDQLLQQQPGTTVGLVWGPPRPPAPTDAYGNLLTPEQDMWDEIEAAETKVERKAQARSSTARRRKTAGTQEEPEAQAEEEQAEAGTGVVAAAAGAAAPKRRRAKKAAVESGSEAAVAEVAAGPQEEGSEGEVAGQGGRACRSKSRSKSSGKSSSKAEAGGAGSGRRRAASVGSSSVGSSSVGSSSGGGGGGGGGVKAPGASRRRGGAKAGSDGGVSGSESE.

Disordered regions lie at residues 87–148 (IRDG…QTPT) and 323–351 (TPAA…PRAA). Polar residues predominate over residues 91 to 111 (PNSNSRCSTVRTHATRSKSTG). Over residues 112-125 (PSRATSSGPATAAP) the composition is skewed to low complexity. Polar residues predominate over residues 134-148 (NDTQDGGLTSEQTPT). Residues 323-337 (TPAAASQTPPTTVTS) show a composition bias toward low complexity. Residues Asp-397, Glu-552, Asn-629, and Asp-634 each coordinate Mg(2+). The tract at residues 710-882 (KVERKAQARS…DGGVSGSESE (173 aa)) is disordered. The segment covering 732–743 (EEPEAQAEEEQA) has biased composition (acidic residues). Low complexity-rich tracts occupy residues 744–758 (EAGT…GAAA), 769–783 (VESG…VAAG), 810–819 (SGKSSSKAEA), and 830–844 (ASVG…SVGS). Gly residues-rich tracts occupy residues 845-857 (SSGG…GGVK) and 868-882 (AKAG…SESE).

Requires Mg(2+) as cofactor. Mn(2+) serves as cofactor.

The protein localises to the plastid. Its subcellular location is the chloroplast. The catalysed reaction is Endonucleolytic cleavage at a junction such as a reciprocal single-stranded crossover between two homologous DNA duplexes (Holliday junction).. In terms of biological role, a structure-specific endonuclease that resolves Holliday junction (HJ) intermediates during genetic recombination. Cleaves 4-way DNA junctions introducing paired nicks in opposing strands, leaving a 5'-terminal phosphate and a 3'-terminal hydroxyl group that are ligated to produce recombinant products. Mediates chloroplast nucleoid segregation during chloroplast division. The protein is Holliday junction resolvase MOC1, chloroplastic of Chlamydomonas reinhardtii (Chlamydomonas smithii).